We begin with the raw amino-acid sequence, 170 residues long: MARMHSRKKGSSGSRPPVVDKLPEWCDVSKEELEKTIMTLHERGMSNAMIGLTLRDQYGVPNLKLILGKSLSSFLRDRNALPEIPEDLSNLMRKALRLRRHLLRAQPRGTVSDTSISRLPRTKDIHNKRALQLVESKIRRLVRYYKQVGRLPATWEYRPETAEIQISSKQ.

Positions 1 to 10 (MARMHSRKKG) are enriched in basic residues. Residues 1 to 20 (MARMHSRKKGSSGSRPPVVD) form a disordered region.

Belongs to the universal ribosomal protein uS15 family. Part of the 30S ribosomal subunit.

This chain is Small ribosomal subunit protein uS15, found in Methanothrix thermoacetophila (strain DSM 6194 / JCM 14653 / NBRC 101360 / PT) (Methanosaeta thermophila).